The chain runs to 281 residues: MSIIEFWLEAKATIDRLIEQFLNSNRDWDLVDISSYILKDGKRFRGTLNMFFTVALGGDIKDSYGGALAIEILHSASLALDDIVDLDATRRGDKAAWVVYGNRKVIFITNYLIPTALRIIQTSYGDDALNTSIELWKDTSVGALRDMYDNSDYIRTIELKTGSLFKLSTVLSAYASKHYNTKQQMLDVGKYLGIIYQVIDDFVDYKTKKVEEIDGSAKQLFKYYREGKLEEYVRSVYLEYKQKYDELISNIPFQSKYLSEIRSLPEFLANGLLKEANIDKI.

Isopentenyl diphosphate contacts are provided by lysine 42, arginine 45, and histidine 74. Mg(2+)-binding residues include aspartate 81 and aspartate 85. Position 91 (arginine 91) interacts with isopentenyl diphosphate.

This sequence belongs to the FPP/GGPP synthase family. Homodimer. The cofactor is Mg(2+).

It catalyses the reaction 2 isopentenyl diphosphate + (2E,6E,10E)-geranylgeranyl diphosphate = all-trans-hexaprenyl diphosphate + 2 diphosphate. In terms of biological role, catalyzes consecutive E-type condensation of two isopentenyl pyrophosphate (IPP) molecules with an allylic substrate such as geranylgeranyl diphosphate (GGPP), farnesyl diphosphate (FPP) or geranyl diphosphate (GPP) to yield the medium-chain product trans-C30-hexaprenyl pyrophosphate (HexPP). GGPP is the physiological substrate. In Saccharolobus solfataricus (strain ATCC 35092 / DSM 1617 / JCM 11322 / P2) (Sulfolobus solfataricus), this protein is Hexaprenyl pyrophosphate synthase (gdS-2).